The following is a 153-amino-acid chain: UPF0756 membrane protein BCB4264_A4705 (153 aa).

4 helical membrane passes run 8–28 (FLFI…TVAI), 54–74 (LGVT…EIGF), 87–107 (WIAL…VQLL), and 117–137 (LVFG…GPLI).

This sequence belongs to the UPF0756 family.

It is found in the cell membrane. This is UPF0756 membrane protein BCB4264_A4705 from Bacillus cereus (strain B4264).